Here is a 90-residue protein sequence, read N- to C-terminus: Nodulation protein NolS (90 aa).

In terms of biological role, involved in nodulation of a particular host, M.lupulina. This is Nodulation protein NolS (nolS) from Sinorhizobium meliloti (strain Sm2011 / Rm2011 / 2011).